Reading from the N-terminus, the 598-residue chain is Ecto-NOX disulfide-thiol exchanger 2 (598 aa).

Residues 99 to 178 (KTVFVGGLPE…GRLHVDFAQA (80 aa)) enclose the RRM domain. Coiled-coil stretches lie at residues 264-299 (IQSA…LSGI) and 352-476 (RREE…KQEN).

It belongs to the ENOX family. Cu cation serves as cofactor. Glycosylated.

The protein localises to the cell membrane. It is found in the secreted. It localises to the extracellular space. Inhibited by the antitumor sulfonylurea LY181984, the vabilloid capsaicin, and retinoids. In terms of biological role, may be involved in cell growth. Probably acts as a terminal oxidase of plasma electron transport from cytosolic NAD(P)H via hydroquinones to acceptors at the cell surface. Hydroquinone oxidase activity alternates with a protein disulfide-thiol interchange/oxidoreductase activity which may control physical membrane displacements associated with vesicle budding or cell enlargement. The activities oscillate with a period length of 22 minutes and play a role in control of the ultradian cellular biological clock. This chain is Ecto-NOX disulfide-thiol exchanger 2 (Enox2), found in Mus musculus (Mouse).